The primary structure comprises 212 residues: Ribosomal RNA small subunit methyltransferase G (212 aa).

Residues Gly73, Ile127–Glu128, and Arg143 contribute to the S-adenosyl-L-methionine site.

The protein belongs to the methyltransferase superfamily. RNA methyltransferase RsmG family.

It localises to the cytoplasm. It catalyses the reaction guanosine(527) in 16S rRNA + S-adenosyl-L-methionine = N(7)-methylguanosine(527) in 16S rRNA + S-adenosyl-L-homocysteine. Its function is as follows. Specifically methylates the N7 position of guanine in position 527 of 16S rRNA. This chain is Ribosomal RNA small subunit methyltransferase G, found in Methylobacterium nodulans (strain LMG 21967 / CNCM I-2342 / ORS 2060).